Reading from the N-terminus, the 211-residue chain is Urease accessory protein UreG (211 aa).

16 to 23 (GPVGSGKT) lines the GTP pocket.

Belongs to the SIMIBI class G3E GTPase family. UreG subfamily. In terms of assembly, homodimer. UreD, UreF and UreG form a complex that acts as a GTP-hydrolysis-dependent molecular chaperone, activating the urease apoprotein by helping to assemble the nickel containing metallocenter of UreC. The UreE protein probably delivers the nickel.

The protein resides in the cytoplasm. In terms of biological role, facilitates the functional incorporation of the urease nickel metallocenter. This process requires GTP hydrolysis, probably effectuated by UreG. In Janthinobacterium sp. (strain Marseille) (Minibacterium massiliensis), this protein is Urease accessory protein UreG.